The following is a 244-amino-acid chain: Carbonyl reductase [NADPH] 2 (244 aa).

NADP(+) is bound at residue 11-39 (LVTGAGKGIGRDTVKALHVSGARVVAVTR). Position 136 (S136) interacts with substrate. The active-site Proton acceptor is Y149. S176 is subject to Phosphoserine.

It belongs to the short-chain dehydrogenases/reductases (SDR) family. Homotetramer. As to expression, lung (ciliated cells, non-ciliated bronchiolar cells and type-II alveolar pneumocytes). Low expression in all extrapulmonary tissues, including adipose tissue.

It localises to the mitochondrion matrix. The catalysed reaction is a secondary alcohol + NADP(+) = a ketone + NADPH + H(+). Its activity is regulated as follows. Allosteric enzyme exhibiting negative cooperativity. Activated 2-5 fold by fatty acids. Functionally, may function in the pulmonary metabolism of endogenous carbonyl compounds, such as aliphatic aldehydes and ketones derived from lipid peroxidation, 3-ketosteroids and fatty aldehydes, as well as in xenobiotic metabolism. The sequence is that of Carbonyl reductase [NADPH] 2 (CBR2) from Sus scrofa (Pig).